Consider the following 338-residue polypeptide: Peptidoglycan deacetylase-like protein FGM2 (338 aa).

Residues Asp49, His124, and His128 each coordinate Zn(2+). Positions 65–257 constitute a NodB homology domain; it reads LSDYSAGIFA…VTNSHGFVSS (193 aa).

The protein belongs to the polysaccharide deacetylase family.

Peptidoglycan deacetylase-like protein; part of the Fg3_54/C64 gene cluster that mediates the biosynthesis of the octapeptide fusaoctaxin A, a virulence factor that is required for cell-to-cell invasiveness of plant host. The 2 nonribosomal peptide synthetases NRPS9 and NRPS5 form an assembly line which likely utilizes GABA as a starter unit (loaded on the unique module M1 of NRPS9) and sequentially incorporates seven extender units composed of the residues L-Ala, L-allo-Ile, L-Ser, L-Val, L-Ser, L-Leu and L-Leu, respectively. During the process, each of the residues that are tethered on modules M3-M7 of NRPS5 containing an E domain can undergo an epimerization reaction to produce a D-configuration before the transpeptidation reaction occurs. The elongation of the peptidyl chain might be terminated by module M8-mediated L-Leu incorporation, followed by R domain-catalyzed 4 electron reduction to release the resulting octapeptide from the assembly line as an alcohol. Fusaoctaxin A is cleaved by the cluster specific ABC transporter FGM5 to the pentapeptide fusapentaxin A and the tripeptide fusatrixin A. The other enzymes from the cluster, FGM1, FGM2, FGM3 and FGM9 seem not to be involved in the biosynthesis of fusaoctaxin A and their functions have still to be determined. The protein is Peptidoglycan deacetylase-like protein FGM2 of Gibberella zeae (strain ATCC MYA-4620 / CBS 123657 / FGSC 9075 / NRRL 31084 / PH-1) (Wheat head blight fungus).